The sequence spans 615 residues: Proteasome-associated ATPase (615 aa).

The tract at residues 1–36 (MSESERPEAGDGTDALGASPDTPLSSEDAAELEQLR) is disordered. Residues 25–102 (SSEDAAELEQ…LREEVDRLGQ (78 aa)) adopt a coiled-coil conformation. Residue 302–307 (GCGKTL) coordinates ATP. Residues 614–615 (YL) form a docks into pockets in the proteasome alpha-ring region.

Belongs to the AAA ATPase family. As to quaternary structure, homohexamer. Assembles into a hexameric ring structure that caps the 20S proteasome core. Strongly interacts with the prokaryotic ubiquitin-like protein Pup through a hydrophobic interface; the interacting region of ARC lies in its N-terminal coiled-coil domain. There is one Pup binding site per ARC hexamer ring. Upon ATP-binding, the C-terminus of ARC interacts with the alpha-rings of the proteasome core, possibly by binding to the intersubunit pockets.

It functions in the pathway protein degradation; proteasomal Pup-dependent pathway. ATPase which is responsible for recognizing, binding, unfolding and translocation of pupylated proteins into the bacterial 20S proteasome core particle. May be essential for opening the gate of the 20S proteasome via an interaction with its C-terminus, thereby allowing substrate entry and access to the site of proteolysis. Thus, the C-termini of the proteasomal ATPase may function like a 'key in a lock' to induce gate opening and therefore regulate proteolysis. The protein is Proteasome-associated ATPase of Mycolicibacterium gilvum (strain PYR-GCK) (Mycobacterium gilvum (strain PYR-GCK)).